A 269-amino-acid chain; its full sequence is 4-hydroxy-tetrahydrodipicolinate reductase (269 aa).

NAD(+)-binding positions include 13–18 (GASGRM) and Asp39. Arg40 lines the NADP(+) pocket. NAD(+) is bound by residues 101 to 103 (GTT) and 125 to 128 (APNM). The active-site Proton donor/acceptor is His158. Residue His159 participates in (S)-2,3,4,5-tetrahydrodipicolinate binding. Lys162 acts as the Proton donor in catalysis. A (S)-2,3,4,5-tetrahydrodipicolinate-binding site is contributed by 168–169 (GT).

It belongs to the DapB family.

It is found in the cytoplasm. The enzyme catalyses (S)-2,3,4,5-tetrahydrodipicolinate + NAD(+) + H2O = (2S,4S)-4-hydroxy-2,3,4,5-tetrahydrodipicolinate + NADH + H(+). It catalyses the reaction (S)-2,3,4,5-tetrahydrodipicolinate + NADP(+) + H2O = (2S,4S)-4-hydroxy-2,3,4,5-tetrahydrodipicolinate + NADPH + H(+). It participates in amino-acid biosynthesis; L-lysine biosynthesis via DAP pathway; (S)-tetrahydrodipicolinate from L-aspartate: step 4/4. Catalyzes the conversion of 4-hydroxy-tetrahydrodipicolinate (HTPA) to tetrahydrodipicolinate. This is 4-hydroxy-tetrahydrodipicolinate reductase from Bordetella pertussis (strain Tohama I / ATCC BAA-589 / NCTC 13251).